The sequence spans 500 residues: Glycerol kinase (500 aa).

T13 is an ADP binding site. ATP contacts are provided by T13, T14, and S15. T13 is a sn-glycerol 3-phosphate binding site. Residue R17 participates in ADP binding. Residues R83, E84, Y135, and D244 each contribute to the sn-glycerol 3-phosphate site. Glycerol is bound by residues R83, E84, Y135, D244, and Q245. Positions 266 and 309 each coordinate ADP. T266, G309, Q313, and G410 together coordinate ATP. ADP-binding residues include G410 and N414.

This sequence belongs to the FGGY kinase family.

The enzyme catalyses glycerol + ATP = sn-glycerol 3-phosphate + ADP + H(+). The protein operates within polyol metabolism; glycerol degradation via glycerol kinase pathway; sn-glycerol 3-phosphate from glycerol: step 1/1. Its activity is regulated as follows. Inhibited by fructose 1,6-bisphosphate (FBP). Functionally, key enzyme in the regulation of glycerol uptake and metabolism. Catalyzes the phosphorylation of glycerol to yield sn-glycerol 3-phosphate. The chain is Glycerol kinase from Burkholderia pseudomallei (strain K96243).